The following is a 179-amino-acid chain: Translation initiation factor IF-3 (179 aa).

This sequence belongs to the IF-3 family. In terms of assembly, monomer.

The protein localises to the cytoplasm. In terms of biological role, IF-3 binds to the 30S ribosomal subunit and shifts the equilibrium between 70S ribosomes and their 50S and 30S subunits in favor of the free subunits, thus enhancing the availability of 30S subunits on which protein synthesis initiation begins. This Buchnera aphidicola subsp. Schizaphis graminum (strain Sg) protein is Translation initiation factor IF-3.